A 570-amino-acid polypeptide reads, in one-letter code: Acetolactate synthase (570 aa).

E60 provides a ligand contact to thiamine diphosphate. FAD contacts are provided by residues Q162, 266-287 (FRNQ…IGYD), and 308-327 (DEII…LIGD). The interval 399–479 (SHAIWMSRYF…IVHIVWNDST (81 aa)) is thiamine pyrophosphate binding. D450 serves as a coordination point for Mg(2+).

This sequence belongs to the TPP enzyme family. The cofactor is Mg(2+). Thiamine diphosphate serves as cofactor.

The enzyme catalyses 2 pyruvate + H(+) = (2S)-2-acetolactate + CO2. It functions in the pathway polyol metabolism; (R,R)-butane-2,3-diol biosynthesis; (R,R)-butane-2,3-diol from pyruvate: step 1/3. The chain is Acetolactate synthase (alsS) from Bacillus subtilis (strain 168).